We begin with the raw amino-acid sequence, 539 residues long: MYESPIILGSKPCTLNIPGMGVLHGLTVLDENGKEKCHRFTGIRYAKPPVGKLRWRRPVTLEDGYDYSGDYNQFKTICPQPFYNNRKNQVRNPDFKYDEDCLFLNIWVPAGEKPAEGWPVLYFIHGGWLQVGNPLHYRQCDPQDLQADGSPAKFILVSPGHRLNLFGFLAGKELLEEDPKSSNFGFWDQRLGLEWTYKHIESFGGNKENIAVGGISAGSYSALFQLIYETYHPEANQIIKRALLLSNGLSVQPKSVEESQIQFNELAQKFGIPLELSSAEKLEKLRAIPFQDLADNILNLRLHTFRAVTDGDFVNPNTFKDIYDGTFGKRIRDSGRELIIGEVNNEHSIYANTNPPKSKEDLFNQVNNYYPEKVTKALLELYPKVPDMEDEKEYLAAIKALFGSIVSDMQVYASTRVLINGLVKGGVPLEKIYRYRIAFRGKFFDKYEPPESLVPHAGDLGLWFYNVVDGILPEEIPIYKAWLKSYGEWMSTGKTDWGTTKTEEYRLLDADGTIKVVDDEKWDWGLKVGRTVAGVFGLN.

S216 functions as the Acyl-ester intermediate in the catalytic mechanism.

The protein belongs to the type-B carboxylesterase/lipase family.

The protein localises to the cytoplasm. It localises to the nucleus. This is an uncharacterized protein from Schizosaccharomyces pombe (strain 972 / ATCC 24843) (Fission yeast).